The following is a 789-amino-acid chain: Mitochondrial inner membrane m-AAA protease component AFG3L1 (789 aa).

The N-terminal 70 residues, 1 to 70 (MLLRLVGAAG…KLTSFSPRLY (70 aa)), are a transit peptide targeting the mitochondrion. The tract at residues 81-121 (FKNKKNRKSASPGNSVPPKKEPKNAGPGGDGGNRGGKGDDF) is disordered. Residues 106-115 (GPGGDGGNRG) show a composition bias toward gly residues. 2 helical membrane-spanning segments follow: residues 139-158 (FRSLAVLGAGVAAGFLYFYF) and 246-264 (FLRSLVPTLVLVSILLYAM). ATP contacts are provided by V302, A303, T344, G345, K346, T347, L348, and H482. Residue H566 coordinates Zn(2+). Residue E567 is part of the active site. Positions 570 and 641 each coordinate Zn(2+). The disordered stretch occupies residues 749 to 789 (EEFVEGTGSLEEDTSLPEGLKDWNKGREEGGTERGLQESPV). The span at 767–789 (GLKDWNKGREEGGTERGLQESPV) shows a compositional bias: basic and acidic residues.

It in the N-terminal section; belongs to the AAA ATPase family. In the C-terminal section; belongs to the peptidase M41 family. In terms of assembly, homooligomer. Forms heterohexamers with Spg7 and Afg3l1. The m-AAA protease is either composed of homohexamers of Afg3l2 or heterohexamers of Afg3l1, Afg3l2 and/or Spg7. The cofactor is Zn(2+).

The protein localises to the mitochondrion inner membrane. It catalyses the reaction ATP + H2O = ADP + phosphate + H(+). Catalytic component of the m-AAA protease, a protease that plays a key role in proteostasis of inner mitochondrial membrane proteins, and which is essential for axonal and neuron development. Afg3l1 possesses both ATPase and protease activities: the ATPase activity is required to unfold substrates, threading them into the internal proteolytic cavity for hydrolysis into small peptide fragments. The m-AAA protease exerts a dual role in the mitochondrial inner membrane: it mediates the processing of specific regulatory proteins and ensures protein quality control by degrading misfolded polypeptides. Required for SPG7 maturation into its active mature form after SPG7 cleavage by mitochondrial-processing peptidase (MPP). This chain is Mitochondrial inner membrane m-AAA protease component AFG3L1, found in Mus musculus (Mouse).